Consider the following 875-residue polypeptide: Valine--tRNA ligase (875 aa).

The 'HIGH' region signature appears at 45-55 (PNVTGVLHMGH). The 'KMSKS' region motif lies at 524-528 (KMSKS). An ATP-binding site is contributed by lysine 527. A coiled-coil region spans residues 803 to 837 (VKSLIDKTKELIRLEKQLEKYKMLNISVSKKLENE).

The protein belongs to the class-I aminoacyl-tRNA synthetase family. ValS type 1 subfamily. In terms of assembly, monomer.

The protein resides in the cytoplasm. The enzyme catalyses tRNA(Val) + L-valine + ATP = L-valyl-tRNA(Val) + AMP + diphosphate. Its function is as follows. Catalyzes the attachment of valine to tRNA(Val). As ValRS can inadvertently accommodate and process structurally similar amino acids such as threonine, to avoid such errors, it has a 'posttransfer' editing activity that hydrolyzes mischarged Thr-tRNA(Val) in a tRNA-dependent manner. This is Valine--tRNA ligase from Borreliella burgdorferi (strain ATCC 35210 / DSM 4680 / CIP 102532 / B31) (Borrelia burgdorferi).